Consider the following 86-residue polypeptide: Toxin Td2 (86 aa).

Residues 1–20 (MTRFVLFLNCFFLICMVVEC) form the signal peptide. An LCN-type CS-alpha/beta domain is found at 21-83 (KEGYLMGADG…TWDRATNTCG (63 aa)). Cystine bridges form between Cys31–Cys82, Cys35–Cys57, Cys43–Cys63, and Cys47–Cys65. Position 84 is an arginine amide (Arg84).

As to expression, expressed by the venom gland.

It localises to the secreted. Beta toxins bind voltage-independently at site-4 of sodium channels (Nav) and shift the voltage of activation toward more negative potentials thereby affecting sodium channel activation and promoting spontaneous and repetitive firing. The sequence is that of Toxin Td2 from Tityus discrepans (Venezuelan scorpion).